The following is a 365-amino-acid chain: Chorismate synthase (365 aa).

Arginine 46 contacts NADP(+). FMN is bound by residues 123–125 (RSS), 241–242 (NG), glycine 281, 296–300 (KPTPS), and arginine 322.

Belongs to the chorismate synthase family. Homotetramer. Requires FMNH2 as cofactor.

The enzyme catalyses 5-O-(1-carboxyvinyl)-3-phosphoshikimate = chorismate + phosphate. It participates in metabolic intermediate biosynthesis; chorismate biosynthesis; chorismate from D-erythrose 4-phosphate and phosphoenolpyruvate: step 7/7. In terms of biological role, catalyzes the anti-1,4-elimination of the C-3 phosphate and the C-6 proR hydrogen from 5-enolpyruvylshikimate-3-phosphate (EPSP) to yield chorismate, which is the branch point compound that serves as the starting substrate for the three terminal pathways of aromatic amino acid biosynthesis. This reaction introduces a second double bond into the aromatic ring system. This is Chorismate synthase from Helicobacter pylori (strain HPAG1).